The chain runs to 1199 residues: Chromosome partition protein Smc (1199 aa).

Residue 32-39 coordinates ATP; it reads PNGSGKSN. A coiled-coil region spans residues 192-528; sequence GVAEFDEKSE…NARIKTLKDM (337 aa). One can recognise an SMC hinge domain in the interval 546-658; sequence PGVVDIAGNL…VDNLENAKKL (113 aa). Residues 691-1051 adopt a coiled-coil conformation; that stretch reads IKVDIDMKKL…YLQLISEVQK (361 aa).

It belongs to the SMC family. In terms of assembly, homodimer.

The protein localises to the cytoplasm. Its function is as follows. Required for chromosome condensation and partitioning. In Methanococcus voltae, this protein is Chromosome partition protein Smc.